Here is a 223-residue protein sequence, read N- to C-terminus: Holliday junction branch migration complex subunit RuvA (223 aa).

Residues 1–64 (MIGKLTGRLD…EDLLQLFGFL (64 aa)) form a domain I region. The tract at residues 65–143 (SPYEKEWHRL…AVMAMGGTLD (79 aa)) is domain II. A flexible linker region spans residues 144–171 (DAMDDVVDDMPGESAAPAPAPQPRAPKR). The segment at 148–177 (DVVDDMPGESAAPAPAPQPRAPKRPASNAQ) is disordered. The domain III stretch occupies residues 172–223 (PASNAQAEALSALQNLGYGPSDAAQAVAQAAESASNTPELIRAALRLLAPKE).

Belongs to the RuvA family. In terms of assembly, homotetramer. Forms an RuvA(8)-RuvB(12)-Holliday junction (HJ) complex. HJ DNA is sandwiched between 2 RuvA tetramers; dsDNA enters through RuvA and exits via RuvB. An RuvB hexamer assembles on each DNA strand where it exits the tetramer. Each RuvB hexamer is contacted by two RuvA subunits (via domain III) on 2 adjacent RuvB subunits; this complex drives branch migration. In the full resolvosome a probable DNA-RuvA(4)-RuvB(12)-RuvC(2) complex forms which resolves the HJ.

Its subcellular location is the cytoplasm. The RuvA-RuvB-RuvC complex processes Holliday junction (HJ) DNA during genetic recombination and DNA repair, while the RuvA-RuvB complex plays an important role in the rescue of blocked DNA replication forks via replication fork reversal (RFR). RuvA specifically binds to HJ cruciform DNA, conferring on it an open structure. The RuvB hexamer acts as an ATP-dependent pump, pulling dsDNA into and through the RuvAB complex. HJ branch migration allows RuvC to scan DNA until it finds its consensus sequence, where it cleaves and resolves the cruciform DNA. The sequence is that of Holliday junction branch migration complex subunit RuvA from Jannaschia sp. (strain CCS1).